Reading from the N-terminus, the 660-residue chain is DNA primase (660 aa).

Residues C40–C64 form a CHC2-type zinc finger. Positions G94 to P115 are disordered. Positions V97–Q110 are enriched in basic and acidic residues. A Toprim domain is found at D261–P343. 3 residues coordinate Mg(2+): E267, D311, and D313. Disordered regions lie at residues D425–Y449 and Q476–E519. Positions Q428 to M442 are enriched in polar residues. Positions P488–R498 are enriched in basic and acidic residues.

Belongs to the DnaG primase family. Monomer. Interacts with DnaB. The cofactor is Zn(2+). Mg(2+) is required as a cofactor.

The catalysed reaction is ssDNA + n NTP = ssDNA/pppN(pN)n-1 hybrid + (n-1) diphosphate.. In terms of biological role, RNA polymerase that catalyzes the synthesis of short RNA molecules used as primers for DNA polymerase during DNA replication. The sequence is that of DNA primase from Pseudomonas putida (strain ATCC 47054 / DSM 6125 / CFBP 8728 / NCIMB 11950 / KT2440).